The sequence spans 181 residues: Protein Syd (181 aa).

Belongs to the Syd family.

It is found in the cell inner membrane. Its function is as follows. Interacts with the SecY protein in vivo. May bind preferentially to an uncomplexed state of SecY, thus functioning either as a chelating agent for excess SecY in the cell or as a regulatory factor that negatively controls the translocase function. This Salmonella agona (strain SL483) protein is Protein Syd.